A 412-amino-acid chain; its full sequence is POU domain, class 4, transcription factor 2 (412 aa).

Positions 29–96 are disordered; it reads LHSASPGSSA…SEAMRRACLP (68 aa). The span at 31 to 53 shows a compositional bias: low complexity; that stretch reads SASPGSSAPAAPSASSPSSSSNA. Composition is skewed to gly residues over residues 54–70 and 78–87; these read GSGG…GGGR and GSGGGGGGGS. The required for transcriptional activation stretch occupies residues 94-240; it reads CLPTPPSNIF…MHQAALSMAH (147 aa). The POU-IV box signature appears at 113–122; it reads RAEALAAVDI. Residues 123-191 form a disordered region; that stretch reads VSQSKSHHHH…HHHHQPHQAL (69 aa). The span at 127-138 shows a compositional bias: basic residues; sequence KSHHHHPPHHSP. The segment covering 152–169 has biased composition (low complexity); that stretch reads PCTSAASSSSVPISHPSA. Basic residues predominate over residues 173-187; it reads THHHHHHHHHHHHQP. Positions 174–188 match the Nuclear speckle targeting signal motif; sequence HHHHHHHHHHHHQPH. Residues 241–412 are required for DNA-binding and transcriptional repression; sequence AHGLPSHMGC…QKRMKYSAGI (172 aa). Positions 253 to 330 constitute a POU-specific domain; the sequence is DVDADPRDLE…ILQAWLEEAE (78 aa). The segment at residues 348-407 is a DNA-binding region (homeobox); that stretch reads KKRKRTSIAAPEKRSLEAYFAIQPRPSSEKIAAIAEKLDLKKNVVRVWFCNQRQKQKRMK.

This sequence belongs to the POU transcription factor family. Class-4 subfamily. Interacts with POU4F1; this interaction inhibits both POU4F1 DNA-binding and transcriptional activities. Interacts (C-terminus) with ESR1 (via DNA-binding domain); this interaction increases the estrogen receptor ESR1 transcriptional activity in a DNA- and ligand 17-beta-estradiol-independent manner. Interacts (via C-terminus) with TP53 (via N-terminus). Interacts with DLX1 (via homeobox DNA-binding domain); this interaction suppresses DLX1-mediated transcriptional activity in postnatal retina enhancing retinal ganglion cell (RGC) differentiation. Interacts with DLX2 (via homeobox DNA-binding domain); this interaction enhances RGC differentiation. Interacts (via C-terminus) with ISL1 (via C-terminus). Interacts with ISL2. Interacts with LHX2. In terms of tissue distribution, expressed in the heart, brain and spinal cord. Expressed in cardiomyocytes (at protein level). Expressed in brain and spinal cord. Expressed in dorsal root ganglion (RGD) neurons.

Its subcellular location is the nucleus. It localises to the nucleus speckle. It is found in the cytoplasm. Functionally, tissue-specific DNA-binding transcription factor involved in the development and differentiation of target cells. Functions either as activator or repressor modulating the rate of target gene transcription through RNA polymerase II enzyme in a promoter-dependent manner. Binds to the consensus octamer motif 5'-AT[A/T]A[T/A]T[A/T]A-3' of promoter of target genes. Plays a fundamental role in the gene regulatory network essential for retinal ganglion cell (RGC) differentiation. Binds to an octamer site to form a ternary complex with ISL1; cooperates positively with ISL1 and ISL2 to potentiate transcriptional activation of RGC target genes being involved in RGC fate commitment in the developing retina and RGC axon formation and pathfinding. Inhibits DLX1 and DLX2 transcriptional activities preventing DLX1- and DLX2-mediated ability to promote amacrine cell fate specification. In cooperation with TP53 potentiates transcriptional activation of BAX promoter activity increasing neuronal cell apoptosis. Negatively regulates BAX promoter activity in the absence of TP53. Acts as a transcriptional coactivator via its interaction with the transcription factor ESR1 by enhancing its effect on estrogen response element (ERE)-containing promoter. Antagonizes the transcriptional stimulatory activity of POU4F1 by preventing its binding to an octamer motif. Involved in TNFSF11-mediated terminal osteoclast differentiation. In Rattus norvegicus (Rat), this protein is POU domain, class 4, transcription factor 2.